The sequence spans 178 residues: Large ribosomal subunit protein uL6 (178 aa).

It belongs to the universal ribosomal protein uL6 family. Part of the 50S ribosomal subunit.

In terms of biological role, this protein binds to the 23S rRNA, and is important in its secondary structure. It is located near the subunit interface in the base of the L7/L12 stalk, and near the tRNA binding site of the peptidyltransferase center. In Frankia casuarinae (strain DSM 45818 / CECT 9043 / HFP020203 / CcI3), this protein is Large ribosomal subunit protein uL6.